We begin with the raw amino-acid sequence, 223 residues long: NLP effector protein 2 (223 aa).

Residues 90 to 100 (AIMYSWYFPKD) carry the Conserved undecapeptide motif motif. Residues 107–113 (GHRHDWE) carry the Conserved p motif motif.

The protein belongs to the Necrosis inducing protein (NPP1) family.

Its subcellular location is the secreted. The protein resides in the host cytoplasm. In terms of biological role, probable secreted effector that may act as a pathogen-associated molecular pattern (PAMP) recognized by the plant immune system. Seems not to induce necrosis, neither in several susceptible or resistant Vitis species nor in the dicot model plant Nicotiana benthamiana. The sequence is that of NLP effector protein 2 from Plasmopara viticola (Downy mildew of grapevine).